Consider the following 662-residue polypeptide: 72 kDa type IV collagenase (662 aa).

A signal peptide spans 1-29 (MEALGARGALAGFLRALCVLGCLLGRATA). Positions 30-109 (PPSPVIKFPG…PRCGNPDVAN (80 aa)) are cleaved as a propeptide — activation peptide. A Cysteine switch motif is present at residues 100–107 (PRCGNPDV). Cys-102 contacts Zn(2+). The segment at 110 to 221 (YNFFPRKPKW…LWTLGEGQVV (112 aa)) is collagenase-like 1. 2 residues coordinate Ca(2+): Asp-134 and Asp-168. Zn(2+)-binding residues include His-178 and Asp-180. Residues Asp-185 and Gly-186 each contribute to the Ca(2+) site. His-193 contributes to the Zn(2+) binding site. Residues Gly-200, Gly-202, and Asp-204 each contribute to the Ca(2+) site. His-206 is a Zn(2+) binding site. The Ca(2+) site is built by Asp-208, Asp-209, and Glu-211. The segment at 222 to 396 (RVKYGNADGE…WGFCPDQGYS (175 aa)) is collagen-binding. 3 Fibronectin type-II domains span residues 228-276 (ADGE…FCPH), 286-334 (ADGQ…FCPE), and 344-392 (SEGA…FCPD). Cystine bridges form between Cys-233–Cys-259, Cys-247–Cys-274, Cys-291–Cys-317, Cys-305–Cys-332, Cys-349–Cys-375, and Cys-363–Cys-390. Residues 397–467 (LFLVAAHEFG…GPTPTLGPVT (71 aa)) form a collagenase-like 2 region. Residue His-403 participates in Zn(2+) binding. Glu-404 is an active-site residue. Zn(2+) contacts are provided by His-407 and His-413. The interval 414–662 (SQDPGALMAP…GSIKTDWLGC (249 aa)) is required for inhibitor TIMP2 binding. Cys-471 and Cys-662 are joined by a disulfide. Hemopexin repeat units lie at residues 474–518 (DIVF…WPEL), 519–565 (PEKI…GLPP), 567–615 (VQRV…WNAI), and 616–662 (PDHL…WLGC). 3 residues coordinate Ca(2+): Asp-478, Asp-523, and Asp-571. A glycan (N-linked (GlcNAc...) asparagine) is linked at Asn-575. Asp-620 provides a ligand contact to Ca(2+). An N-linked (GlcNAc...) asparagine glycan is attached at Asn-644.

This sequence belongs to the peptidase M10A family. Interacts (via the C-terminal hemopexin-like domains-containing region) with the integrin alpha-V/beta-3; the interaction promotes vascular invasion in angiogenic vessels and melamoma cells. Interacts (via the C-terminal PEX domain) with TIMP2 (via the C-terminal); the interaction inhibits the degradation activity. Interacts with GSK3B. It depends on Ca(2+) as a cofactor. The cofactor is Zn(2+). In terms of processing, phosphorylation on multiple sites modulates enzymatic activity. Phosphorylated by PKC in vitro. Post-translationally, the propeptide is processed by MMP14 (MT-MMP1) and MMP16 (MT-MMP3). Autocatalytic cleavage in the C-terminal produces the anti-angiogenic peptide, PEX. This processing appears to be facilitated by binding integrinv/beta3.

It is found in the secreted. Its subcellular location is the extracellular space. It localises to the extracellular matrix. The protein localises to the membrane. The protein resides in the nucleus. The enzyme catalyses Cleavage of gelatin type I and collagen types IV, V, VII, X. Cleaves the collagen-like sequence Pro-Gln-Gly-|-Ile-Ala-Gly-Gln.. Ubiquitinous metalloproteinase that is involved in diverse functions such as remodeling of the vasculature, angiogenesis, tissue repair, tumor invasion, inflammation, and atherosclerotic plaque rupture. As well as degrading extracellular matrix proteins, can also act on several nonmatrix proteins such as big endothelial 1 and beta-type CGRP promoting vasoconstriction. Also cleaves KISS at a Gly-|-Leu bond. Appears to have a role in myocardial cell death pathways. Contributes to myocardial oxidative stress by regulating the activity of GSK3beta. Cleaves GSK3beta in vitro. Involved in the formation of the fibrovascular tissues. In terms of biological role, PEX, the C-terminal non-catalytic fragment of MMP2, possesses anti-angiogenic and anti-tumor properties and inhibits cell migration and cell adhesion to FGF2 and vitronectin. Ligand for integrin alpha-v/beta-3 on the surface of blood vessels. This chain is 72 kDa type IV collagenase (MMP2), found in Oryctolagus cuniculus (Rabbit).